An 805-amino-acid chain; its full sequence is Replication restart protein PriA (805 aa).

Positions 1–110 (MNFAEVIVDV…QAMLPAALKA (110 aa)) are 3'BD. The tract at residues 111–166 (KYEKELKIAHGADLPPQVERLFSETKTLLYSDIPDHETLKLIQRHVQKGDIDVTYK) is linker. The interval 167–253 (VAQKTNKKMV…KESYEEVYRD (87 aa)) is WH. One can recognise a Helicase ATP-binding domain in the interval 282-448 (TLDSDEHKVF…QKGVYELLSL (167 aa)). Residue 295–302 (GVTGSGKT) participates in ATP binding. The DEAH box signature appears at 391–394 (DEEH). Zn(2+) contacts are provided by Cys510, Cys513, Cys519, Cys522, Cys537, Cys540, Cys550, and Cys553. A Helicase C-terminal domain is found at 545 to 699 (PVPHTCPECA…TFYQHEMAHR (155 aa)).

It belongs to the helicase family. PriA subfamily. Monomer. Component of the replication restart primosome which assembles in this order; PriA, DnaD then DnaB. The preferred DNA substrate mimics an arrested DNA replication fork with unreplicated lagging strand. Interacts with DnaD but not DnaB. Interacts with SSB (sbbA) via the latter's 35 residue C-terminal tail which tethers PriA to ssDNA. Colocalizes with DNA pol III subunit gamma/tau (dnaX). May interact with RarA. The cofactor is Zn(2+).

The protein resides in the cytoplasm. Its subcellular location is the nucleoid. The catalysed reaction is Couples ATP hydrolysis with the unwinding of duplex DNA by translocating in the 3'-5' direction.. It carries out the reaction ATP + H2O = ADP + phosphate + H(+). Functionally, initiates the restart of stalled replication forks, which reloads the replicative helicase on sites other than the origin of replication. Recognizes and binds to abandoned replication forks and remodels them to uncover a helicase loading site. Promotes assembly of the primosome at these replication forks. Serves as the initiating protein for assembly of the replication restart primosome; binding of PriA to an arrested DNA replication fork with unreplicated lagging strand triggers assembly. Sequentially DnaD (possibly as a dimer) and DnaB homotetramers bind. Assembly probably continues by loading of the DnaC replicative helicase aided by helicase loader DnaI. A single-strand (ss)DNA-dependent ATPase with helicase activity. Recognizes and binds the arrested nascent DNA chain at stalled replication forks. Binds forked DNA substrates and makes a larger complex with RarA; RarA has no effect on the helicase function. Binds ssDNA, D-loops and replication fork-like substrates but not double-stranded (ds)DNA; the preferred DNA substrate mimics an arrested DNA replication fork with an unreplicated lagging strand. Recognizes nicked dsDNA. A supershift on ssDNA occurs in the presence of single-stranded binding protein (SSB). Cannot substitute for E.coli PriA. Its function is as follows. Required for replication of plasmids that have a rolling circle mechanism, which produces circular single-stranded (ss)DNA intermediates corresponding to the lagging strand template, which are then converted into double-stranded (ds)DNA; priA is required to activate the conversion of ssDNA into dsDNA. This is Replication restart protein PriA from Bacillus subtilis (strain 168).